The primary structure comprises 418 residues: S-adenosylmethionine synthase (418 aa).

H16 is a binding site for ATP. D18 contacts Mg(2+). K(+) is bound at residue E44. The L-methionine site is built by E57 and Q100. A flexible loop region spans residues 100-110; the sequence is QSPDIAQGVDS. Residues 174–176, D259, 265–266, A282, and K286 contribute to the ATP site; these read DGK and RK. D259 provides a ligand contact to L-methionine. K290 contributes to the L-methionine binding site.

This sequence belongs to the AdoMet synthase family. As to quaternary structure, homotetramer; dimer of dimers. Mg(2+) is required as a cofactor. It depends on K(+) as a cofactor.

It localises to the cytoplasm. The enzyme catalyses L-methionine + ATP + H2O = S-adenosyl-L-methionine + phosphate + diphosphate. It participates in amino-acid biosynthesis; S-adenosyl-L-methionine biosynthesis; S-adenosyl-L-methionine from L-methionine: step 1/1. In terms of biological role, catalyzes the formation of S-adenosylmethionine (AdoMet) from methionine and ATP. The overall synthetic reaction is composed of two sequential steps, AdoMet formation and the subsequent tripolyphosphate hydrolysis which occurs prior to release of AdoMet from the enzyme. In Acaryochloris marina (strain MBIC 11017), this protein is S-adenosylmethionine synthase.